The sequence spans 114 residues: uncharacterized protein (114 aa).

Possibly involved in pGI2 replication mechanism. This is an uncharacterized protein from Bacillus thuringiensis.